The primary structure comprises 1828 residues: Protein TIC 214 (1828 aa).

6 helical membrane passes run 18–38, 64–84, 87–107, 124–144, 172–192, and 222–242; these read IINS…FSIG, FITG…HLAM, PYTI…WKNH, FSIQ…HFVL, VGWL…LFWI, and VNIF…SPIL. Residues 270–279 show a composition bias toward basic and acidic residues; that stretch reads SEAKETKQEQ. Disordered regions lie at residues 270 to 301, 618 to 637, 741 to 763, and 1533 to 1571; these read SEAK…PNKL, DLQQ…HAIR, EFKT…EDKK, and KEEF…RQSK. Positions 1550-1562 are enriched in basic and acidic residues; it reads KDVEKDYAKSDIK.

The protein belongs to the TIC214 family. In terms of assembly, part of the Tic complex.

The protein resides in the plastid. It is found in the chloroplast inner membrane. Its function is as follows. Involved in protein precursor import into chloroplasts. May be part of an intermediate translocation complex acting as a protein-conducting channel at the inner envelope. In Calycanthus floridus var. glaucus (Eastern sweetshrub), this protein is Protein TIC 214.